The sequence spans 240 residues: Protein OPG176 (240 aa).

This sequence belongs to the orthopoxvirus OPG176 family. Tetramer. Interacts with host MYD88, TRF4, TICAM2 and MAL.

BCL2-like protein which disrupts the host immune response by inhibiting the TLR4 signaling pathway leading to NF-kappa-B activation. Acts close to the plasma membrane and targets several host TIR-domain containing adapter proteins including MYD88, TIRAP, TRIF and TICAM2. In turn, blocks the host NF-kappa-B and TRIF-mediated IRF3 activation. This chain is Protein OPG176 (OPG176), found in Cynomys gunnisoni (Gunnison's prairie dog).